The sequence spans 377 residues: Apelin receptor (377 aa).

Residues 1–28 are Extracellular-facing; it reads MEDDGYNYYGADNQSECDYADWKPSGAL. N-linked (GlcNAc...) asparagine glycosylation is present at asparagine 13. 2 disulfides stabilise this stretch: cysteine 17-cysteine 279 and cysteine 100-cysteine 179. A helical membrane pass occupies residues 29-52; it reads IPAIYMLVFLLGTTGNGLVLWTVF. The Cytoplasmic segment spans residues 53–62; that stretch reads RTSREKRRSA. Residues 63–84 traverse the membrane as a helical segment; sequence DIFIASLAVADLTFVVTLPLWA. Over 85–97 the chain is Extracellular; sequence TYTYREFDWPFGT. The helical transmembrane segment at 98–123 threads the bilayer; it reads FSCKLSSYLIFVNMYASVFCLTGLSF. The Cytoplasmic segment spans residues 124–144; sequence DRYLAIVRPVANARLRLRVSG. Residues 145-162 traverse the membrane as a helical segment; that stretch reads AVATAVLWVLAALLAVPV. Residues 163–196 are Extracellular-facing; the sequence is MVFRSTDASENGTKIQCYMDYSMVATSNSEWAWE. N-linked (GlcNAc...) asparagine glycosylation is present at asparagine 173. Residues 197 to 221 traverse the membrane as a helical segment; that stretch reads VGLGVSSTAVGFVVPFTIMLTCYFF. Residues 222–244 lie on the Cytoplasmic side of the membrane; that stretch reads IAQTIAGHFRKERIEGLRKRRRL. The helical transmembrane segment at 245 to 268 threads the bilayer; that stretch reads LSIIVVLVVTFALCWMPYHLVKTL. Over 269–287 the chain is Extracellular; it reads YMLGSLLHWPCDFDIFLMN. Residues 288–310 form a helical membrane-spanning segment; sequence VFPYCTCISYVNSCLNPFLYAFF. Topologically, residues 311-377 are cytoplasmic; it reads DPRFRQACTS…IPYSQETLVD (67 aa). The disordered stretch occupies residues 334-377; that stretch reads HSSSAEKSASYSSGHSQGPGPNMGKGGEQMHEKSIPYSQETLVD. The segment covering 335–349 has biased composition (low complexity); the sequence is SSSAEKSASYSSGHS.

The protein belongs to the G-protein coupled receptor 1 family. In terms of assembly, homodimer; dimerization inhibits APLNR-mediated G protein and beta-arrestin signaling pathways compared to monomeric APLNR. As to expression, expressed in coronary endothelial cells (at protein level). Expressed in the embryo, allantoic and endothelial precursor cells of the yolk sac at 8 days post-coitum (dpc). Expressed in the secondary heart field and somite at 8.25 dpc. Expressed in fetal allantoic endothelial cells at 9 dpc. Expressed in the allantoid and the invading fetal vasculature of the placenta at 9.5 dpc. Expressed in endothelial cells adjacent to syncytiotrophoblast cells at 10.5 dpc. Expressed weakly in the embryonic heart at 11.5 dpc. Expressed in the adult heart. Expressed in endothelial cells and cardiomyocytes and weakly expressed in fibroblasts.

It localises to the cell membrane. In terms of biological role, g protein-coupled receptor for peptide hormones apelin (APLN) and apelin receptor early endogenous ligand (APELA), that plays a role in the regulation of normal cardiovascular function and fluid homeostasis. When acting as apelin receptor, activates both G(i) protein pathway that inhibits adenylate cyclase activity, and the beta-arrestin pathway leading to internalization of the receptor. APLNR/APJ receptor is also activated by mechanical strech in a G-protein-independent fashion to induce beta-arrestin signaling leading to cardiac hypertrophy. However, the presence of apelin ligand blunts cardiac hypertrophic induction from APLNR/APJ on response to pathological stimuli. Plays a key role in early development such as gastrulation, blood vessels formation and heart morphogenesis by acting as a receptor for APELA hormone. May promote angioblast migration toward the embryonic midline, i.e. the position of the future vessel formation, during vasculogenesis. Promotes sinus venosus (SV)-derived endothelial cells migration into the developing heart to promote coronary blood vessel development. Also plays a role in various processes in adults such as regulation of blood vessel formation, blood pressure and heart contractility and protection from cardiac hypertrophy and heart failure. This Mus musculus (Mouse) protein is Apelin receptor.